A 162-amino-acid polypeptide reads, in one-letter code: Allophycocyanin beta chain (162 aa).

At Asn-72 the chain carries N4-methylasparagine. Residue Cys-82 coordinates (2R,3E)-phycocyanobilin.

The protein belongs to the phycobiliprotein family. Heterodimer of an alpha and a beta chain. In terms of processing, contains one covalently linked phycocyanobilin chromophore.

The protein resides in the cellular thylakoid membrane. Light-harvesting photosynthetic bile pigment-protein from the phycobiliprotein complex. Allophycocyanin has a maximum absorption at approximately 650 nanometers. This is Allophycocyanin beta chain from Microchaete diplosiphon (Fremyella diplosiphon).